Consider the following 504-residue polypeptide: Protoporphyrinogen oxidase, mitochondrial (504 aa).

Residues 20–25, 43–44, lysine 51, and 65–68 each bind FAD; these read GAGVSG, EA, and GANT. Residues 213–232 form a disordered region; the sequence is SPKNEKKQGPPKTSANKKRQ. FAD contacts are provided by residues valine 264 and 473–475; that span reads LSV.

It belongs to the protoporphyrinogen/coproporphyrinogen oxidase family. Protoporphyrinogen oxidase subfamily. FAD serves as cofactor.

Its subcellular location is the mitochondrion. The catalysed reaction is protoporphyrinogen IX + 3 O2 = protoporphyrin IX + 3 H2O2. The protein operates within porphyrin-containing compound metabolism; protoporphyrin-IX biosynthesis; protoporphyrin-IX from protoporphyrinogen-IX: step 1/1. Inhibited by the herbicide acifluorfen. Catalyzes the 6-electron oxidation of protoporphyrinogen-IX to form protoporphyrin-IX. Its function is as follows. Provides precursor for the mitochondrial and plastidic heme synthesis and the predominant chlorophyll synthesis in plastids. This Nicotiana tabacum (Common tobacco) protein is Protoporphyrinogen oxidase, mitochondrial (PPXII).